Reading from the N-terminus, the 173-residue chain is Pyridoxal 5'-phosphate synthase subunit PdxT (173 aa).

49 to 51 (GES) contributes to the L-glutamine binding site. Cys81 functions as the Nucleophile in the catalytic mechanism. L-glutamine-binding positions include Arg113 and 141–142 (IR).

It belongs to the glutaminase PdxT/SNO family. In the presence of PdxS, forms a dodecamer of heterodimers. Only shows activity in the heterodimer.

The catalysed reaction is aldehydo-D-ribose 5-phosphate + D-glyceraldehyde 3-phosphate + L-glutamine = pyridoxal 5'-phosphate + L-glutamate + phosphate + 3 H2O + H(+). It catalyses the reaction L-glutamine + H2O = L-glutamate + NH4(+). The protein operates within cofactor biosynthesis; pyridoxal 5'-phosphate biosynthesis. In terms of biological role, catalyzes the hydrolysis of glutamine to glutamate and ammonia as part of the biosynthesis of pyridoxal 5'-phosphate. The resulting ammonia molecule is channeled to the active site of PdxS. The polypeptide is Pyridoxal 5'-phosphate synthase subunit PdxT (Mycolicibacterium paratuberculosis (strain ATCC BAA-968 / K-10) (Mycobacterium paratuberculosis)).